A 311-amino-acid chain; its full sequence is Ribosomal RNA small subunit methyltransferase H (311 aa).

S-adenosyl-L-methionine-binding positions include Ala-32–His-34, Asp-52, Phe-79, Asp-100, and Gln-107.

This sequence belongs to the methyltransferase superfamily. RsmH family.

The protein resides in the cytoplasm. The enzyme catalyses cytidine(1402) in 16S rRNA + S-adenosyl-L-methionine = N(4)-methylcytidine(1402) in 16S rRNA + S-adenosyl-L-homocysteine + H(+). In terms of biological role, specifically methylates the N4 position of cytidine in position 1402 (C1402) of 16S rRNA. This Staphylococcus aureus (strain COL) protein is Ribosomal RNA small subunit methyltransferase H.